Here is a 409-residue protein sequence, read N- to C-terminus: WW domain-containing oxidoreductase (409 aa).

Residues 1–23 form a disordered region; it reads MIALPDTDSEDELPPGWEERATD. 2 consecutive WW domains span residues 11 to 44 and 52 to 86; these read DELPPGWEERATDDGTVCYVNQQGKTSQWTHPRT and GELPLGWEKYYDEQGKRFMFLNKETQQRTNVDPRL. 128–134 contacts NADP(+); the sequence is GANCGIG. Ser257 lines the substrate pocket. Catalysis depends on Tyr288, which acts as the Proton acceptor.

It belongs to the short-chain dehydrogenases/reductases (SDR) family.

It is found in the cytoplasm. The protein localises to the mitochondrion. Its subcellular location is the golgi apparatus. It localises to the lysosome. In terms of biological role, putative oxidoreductase. May control genotoxic stress-induced cell death. May play a role in TGFB1 signaling and TGFB1-mediated cell death. May also play a role in tumor necrosis factor (TNF)-mediated cell death. May play a role in Wnt signaling. The chain is WW domain-containing oxidoreductase (Wwox) from Drosophila melanogaster (Fruit fly).